A 366-amino-acid chain; its full sequence is Phenylalanine--tRNA ligase alpha subunit (366 aa).

Position 259 (Glu-259) interacts with Mg(2+).

It belongs to the class-II aminoacyl-tRNA synthetase family. Phe-tRNA synthetase alpha subunit type 1 subfamily. As to quaternary structure, tetramer of two alpha and two beta subunits. It depends on Mg(2+) as a cofactor.

Its subcellular location is the cytoplasm. It carries out the reaction tRNA(Phe) + L-phenylalanine + ATP = L-phenylalanyl-tRNA(Phe) + AMP + diphosphate + H(+). In Erythrobacter litoralis (strain HTCC2594), this protein is Phenylalanine--tRNA ligase alpha subunit.